A 146-amino-acid polypeptide reads, in one-letter code: Ribonuclease H (146 aa).

Residues 1 to 143 (MEKTITIYTD…CDELARLAIK (143 aa)) form the RNase H type-1 domain. Mg(2+) contacts are provided by Asp-10, Glu-48, Asp-70, and Asp-135.

This sequence belongs to the RNase H family. As to quaternary structure, monomer. The cofactor is Mg(2+).

The protein resides in the cytoplasm. The catalysed reaction is Endonucleolytic cleavage to 5'-phosphomonoester.. Functionally, endonuclease that specifically degrades the RNA of RNA-DNA hybrids. The chain is Ribonuclease H from Chlorobaculum parvum (strain DSM 263 / NCIMB 8327) (Chlorobium vibrioforme subsp. thiosulfatophilum).